The sequence spans 473 residues: Keratin, type I cytoskeletal 16 (473 aa).

Residues 1 to 116 are head; it reads MTTCSRQFTS…AGGDGLLVGS (116 aa). Positions 117–152 are coil 1A; it reads EKVTMQNLNDRLASYLDKVRALEEANADLEVKIRDW. Residues 117–428 enclose the IF rod domain; that stretch reads EKVTMQNLND…RLLEGEDAHL (312 aa). A linker 1 region spans residues 153 to 170; sequence YQRQRPSEIKDYSPYFKT. The interval 171 to 262 is coil 1B; it reads IEDLRNKIIA…KNHEEEMLAL (92 aa). The tract at residues 263–285 is linker 12; it reads RGQTGGDVNVEMDAAPGVDLSRI. A coil 2 region spans residues 286-424; the sequence is LNEMRDQYEQ…ATYRRLLEGE (139 aa). The interval 425–473 is tail; that stretch reads DAHLSSQQASGQSYSSREVFTSSSSSSSRQTRPILKEQSSSSFSQGQSS. Positions 428-473 are disordered; that stretch reads LSSQQASGQSYSSREVFTSSSSSSSRQTRPILKEQSSSSFSQGQSS. 2 stretches are compositionally biased toward low complexity: residues 429–452 and 462–473; these read SSQQ…SSSS and QSSSSFSQGQSS.

Belongs to the intermediate filament family. As to quaternary structure, heterodimer of a type I and a type II keratin. KRT16 associates with KRT6 isomers (KRT6A or KRT6B). Interacts with TCHP. Interacts with TRADD. Expressed in the corneal epithelium (at protein level).

Functionally, epidermis-specific type I keratin that plays a key role in skin. Acts as a regulator of innate immunity in response to skin barrier breach: required for some inflammatory checkpoint for the skin barrier maintenance. This is Keratin, type I cytoskeletal 16 (KRT16) from Homo sapiens (Human).